The sequence spans 456 residues: RNA polymerase II-associated protein 1 homolog (456 aa).

Positions 382–456 (LRSVEGSLNE…PVEQLQNEED (75 aa)) are disordered. Phosphoserine is present on S388. A compositionally biased stretch (basic and acidic residues) spans 396–406 (EEKPAESREQL). Polar residues-rich tracts occupy residues 408 to 433 (SAEQ…QANS) and 441 to 456 (GNTQ…NEED).

Belongs to the PAF1 family.

The protein localises to the cytoplasm. It is found in the nucleus. This chain is RNA polymerase II-associated protein 1 homolog, found in Schizosaccharomyces pombe (strain 972 / ATCC 24843) (Fission yeast).